A 381-amino-acid chain; its full sequence is ADP,ATP carrier protein 1, mitochondrial (381 aa).

The N-terminal 70 residues, 1-70 (MVDQVQHPTI…ATTASPVFVQ (70 aa)), are a transit peptide targeting the mitochondrion. 3 Solcar repeats span residues 78 to 171 (TNFA…FKRL), 183 to 276 (KWFA…VKPV), and 284 to 370 (DSFF…LQLI). Helical transmembrane passes span 80–107 (FALD…VKLL), 148–172 (TANV…KRLF), 181–201 (YWKW…SSLL), 252–273 (FNIS…YDSV), and 287–307 (FASF…SYPI). Arginine 153 and lysine 165 together coordinate ADP. Residue arginine 311 participates in ADP binding. Residues 311–316 (RRRMMM) are important for transport activity. The Nucleotide carrier signature motif signature appears at 311–316 (RRRMMM). Residues 347–367 (AGANILRAVAGAGVLSGYDKL) traverse the membrane as a helical segment.

The protein belongs to the mitochondrial carrier (TC 2.A.29) family. In terms of assembly, monomer.

The protein resides in the mitochondrion inner membrane. It catalyses the reaction ADP(in) + ATP(out) = ADP(out) + ATP(in). The matrix-open state (m-state) is inhibited by the membrane-permeable bongkrekic acid (BKA). The cytoplasmic-open state (c-state) is inhibited by the membrane-impermeable toxic inhibitor carboxyatractyloside (CATR). In terms of biological role, ADP:ATP antiporter that mediates import of ADP into the mitochondrial matrix for ATP synthesis, and export of ATP out to fuel the cell. Cycles between the cytoplasmic-open state (c-state) and the matrix-open state (m-state): operates by the alternating access mechanism with a single substrate-binding site intermittently exposed to either the cytosolic (c-state) or matrix (m-state) side of the inner mitochondrial membrane. The polypeptide is ADP,ATP carrier protein 1, mitochondrial (AAC1) (Arabidopsis thaliana (Mouse-ear cress)).